Consider the following 290-residue polypeptide: Picrinine-N-methytransferase (290 aa).

The SAM motif I stretch occupies residues 71 to 80 (MLDVGCGIGG). Residues 133-139 (DGTFDLV) carry the Vacuolar targeting signal motif. The tract at residues 134-142 (GTFDLVFTI) is SAM motif II. Residues 161–170 (VAAPGAPIVI) form an SAM motif III region.

This sequence belongs to the class I-like SAM-binding methyltransferase superfamily. gTMT family. In terms of assembly, homodimer. In terms of tissue distribution, accumulates in tissues actively synthesizing monoterpenoid indole alkaloids (MIAs) (at protein level). Mainly expressed in young leaves and, to a lower extent, in roots and stems.

It localises to the vacuole membrane. It catalyses the reaction picrinine + S-adenosyl-L-methionine = ervincine + S-adenosyl-L-homocysteine + H(+). The protein operates within alkaloid biosynthesis; vindoline biosynthesis. Functionally, S-adenosyl-L-methionine-dependent N-methyltransferase involved in the biosynthesis of biologically active monoterpenoid indole alkaloids (MIAs) natural products including vindoline. Catalyzes the conversion of picrinine to N-methylpicrinine (ervincine). Also accepts, with low efficiency, 21-hydroxycyclolochnericine and norajmaline as substrates. The chain is Picrinine-N-methytransferase from Rauvolfia serpentina (Serpentine wood).